Here is a 370-residue protein sequence, read N- to C-terminus: Putative F-box protein At1g46984 (370 aa).

The 47-residue stretch at 18–64 (YTQLSTLPIDLIIEILSRLPMNSIAICRLVSKQWASILQSSDFTESF) folds into the F-box domain.

This chain is Putative F-box protein At1g46984, found in Arabidopsis thaliana (Mouse-ear cress).